Reading from the N-terminus, the 313-residue chain is uncharacterized protein (313 aa).

2 disordered regions span residues Glu24 to Asn53 and Thr190 to Arg291. Residues Thr211–Ser229 are compositionally biased toward polar residues. Over residues Ser239–Ser260 the composition is skewed to low complexity. Residues Asp261–Asp284 show a composition bias toward polar residues.

This is an uncharacterized protein from Saccharomyces cerevisiae (strain ATCC 204508 / S288c) (Baker's yeast).